Reading from the N-terminus, the 97-residue chain is Large ribosomal subunit protein uL23 (97 aa).

The protein belongs to the universal ribosomal protein uL23 family. As to quaternary structure, part of the 50S ribosomal subunit. Contacts protein L29, and trigger factor when it is bound to the ribosome.

Its function is as follows. One of the early assembly proteins it binds 23S rRNA. One of the proteins that surrounds the polypeptide exit tunnel on the outside of the ribosome. Forms the main docking site for trigger factor binding to the ribosome. This chain is Large ribosomal subunit protein uL23, found in Anaeromyxobacter dehalogenans (strain 2CP-1 / ATCC BAA-258).